The chain runs to 481 residues: Surface lipoprotein assembly modifier 2 (481 aa).

The first 24 residues, 1–24 (MKNGVKQLFLLSLIGLSLTNVAWA), serve as a signal peptide directing secretion. Residues 24-192 (AEVARPKNDT…QYLLTLNQRN (169 aa)) form an N-terminal domain region. The C-terminal probable beta barrel stretch occupies residues 193–481 (QWIWQVGLNF…RIYLEIGKIF (289 aa)). 14 consecutive transmembrane segments (beta stranded) span residues 194-204 (WIWQVGLNFLN), 223-243 (AWEKESGQGVGYSLSVEKKWP), 248-257 (FFSKTMFNGN), 271-281 (TVRIGGGLGYQ), 285-295 (VEVSLFPFQEK), 315-325 (LGIRLENVDWL), 329-339 (WQISTALEYGE), 353-363 (YFVSSTLFYLP), 368-377 (FWFVGMDFHR), 390-399 (KTLRLGWGQD), 404-414 (ISSRLTFSYAN), 432-441 (YTTTITLWHR), 448-458 (LTPKLSWDYQK), and 471-481 (NRIYLEIGKIF).

The protein belongs to the Slam family.

It is found in the cell outer membrane. In terms of biological role, required for correct export to the cell surface of some cell outer membrane lipoproteins. The chain is Surface lipoprotein assembly modifier 2 from Haemophilus influenzae (strain ATCC 51907 / DSM 11121 / KW20 / Rd).